Here is a 399-residue protein sequence, read N- to C-terminus: Transmembrane protein 237 homolog (399 aa).

The segment covering 1–11 (MPPTSRPVPPP) has biased composition (pro residues). The tract at residues 1-158 (MPPTSRPVPP…PHDKRNMPAK (158 aa)) is disordered. Basic and acidic residues-rich tracts occupy residues 36 to 45 (NQQRRFRENN), 111 to 135 (EAAKHSREDPSGETVEVRRPNDPRR), and 144 to 158 (KSFRDPHDKRNMPAK). Helical transmembrane passes span 222 to 242 (IANIIQGFLAGISVMLAIFSF), 256 to 276 (MSLPIHAGFMVAFTVGLVSAI), 301 to 321 (GLITFIVWFVGLVSTLLCIQL), and 343 to 363 (VFNVLRALTSGLGFLLLAFKP).

Belongs to the TMEM237 family.

It localises to the membrane. It is found in the cell projection. Its subcellular location is the cilium. Component of the transition zone in primary cilia. Required for ciliogenesis. This Caenorhabditis elegans protein is Transmembrane protein 237 homolog.